The sequence spans 466 residues: Glutamate decarboxylase beta (466 aa).

Substrate is bound by residues threonine 62 and asparagine 83. Residues 126–127, threonine 212, and histidine 275 each bind pyridoxal 5'-phosphate; that span reads SS. Lysine 276 is modified (N6-(pyridoxal phosphate)lysine). N6-acetyllysine occurs at positions 446, 453, and 464.

Belongs to the group II decarboxylase family. As to quaternary structure, homohexamer composed of three dimers. Requires pyridoxal 5'-phosphate as cofactor.

It carries out the reaction L-glutamate + H(+) = 4-aminobutanoate + CO2. Converts glutamate to gamma-aminobutyrate (GABA), consuming one intracellular proton in the reaction. The gad system helps to maintain a near-neutral intracellular pH when cells are exposed to extremely acidic conditions. The ability to survive transit through the acidic conditions of the stomach is essential for successful colonization of the mammalian host by commensal and pathogenic bacteria. In Shigella flexneri, this protein is Glutamate decarboxylase beta (gadB).